The following is a 93-amino-acid chain: Small ribosomal subunit protein uS17 (93 aa).

The protein belongs to the universal ribosomal protein uS17 family. As to quaternary structure, part of the 30S ribosomal subunit.

In terms of biological role, one of the primary rRNA binding proteins, it binds specifically to the 5'-end of 16S ribosomal RNA. This chain is Small ribosomal subunit protein uS17, found in Corynebacterium aurimucosum (strain ATCC 700975 / DSM 44827 / CIP 107346 / CN-1) (Corynebacterium nigricans).